The following is a 72-amino-acid chain: Small ribosomal subunit protein eS31 (72 aa).

4 residues coordinate Zn(2+): Cys-32, Cys-35, Cys-51, and Cys-54. The C4-type zinc-finger motif lies at 32–54 (CPRCGSVMAYHKEPVPRWHCGKC).

It belongs to the eukaryotic ribosomal protein eS31 family. Part of the 30S ribosomal subunit. Zn(2+) is required as a cofactor.

This chain is Small ribosomal subunit protein eS31, found in Caldivirga maquilingensis (strain ATCC 700844 / DSM 13496 / JCM 10307 / IC-167).